Here is a 533-residue protein sequence, read N- to C-terminus: MAFANLRKVLISDSLDPCCREILQDGGLQVVEKQNLSKEELIAELQDCEGLIVRSATKVTSDVINAAKKLQVVGRAGTGVDNVDLEAATRKGILVMNTPNGNSLSAAELTCGMILCLARQIPQATASMKDGKWERKKFMGTELNGKVLGILGLGRIGREVATRMQSFGMKTIGYDPIIAPEVSASFGVQQLPLEEIWPLCDFITVHTPLLPSTTGLLNDSTFALCKKGVRVVNCARGGIVDEGALLRALQSGQCAGAALDVFTEEPPRDRALVDHEKVISCPHLGASTREAQSRCGEEIAIQFVDMVKGRSLAGVVNAQALTSAFSPHTKPWIGLAEALGALMQAWAGSPKGTIQVVTQGTSLKNSGTCLSPAVIVGLLKEASHRADVNLVNAKLLEKEAGLHVTTSHNPAAPEEQGGAECFLTVALAGAPYQAVGLVQGTAPMLHALNGAVFRPEVPLRRGLPLLLFRAQPSNPTMLPTMIGLLAEARVQLLSYQTSVVSDGETWHVMAISSLLPSLEPWKQHVTEAFQFHF.

Ala2 carries the N-acetylalanine modification. Phosphoserine is present on Ser14. Residue Lys58 is modified to N6-acetyllysine. NAD(+)-binding positions include Thr78, 155–156 (RI), Asp175, Thr207, 234–236 (CAR), and Asp260. Thr78 is modified (phosphothreonine). Arg236 is a catalytic residue. Residue Glu265 is part of the active site. His283 acts as the Proton donor in catalysis. 283-286 (HLGA) lines the NAD(+) pocket.

It belongs to the D-isomer specific 2-hydroxyacid dehydrogenase family. Homotetramer.

The enzyme catalyses (2R)-3-phosphoglycerate + NAD(+) = 3-phosphooxypyruvate + NADH + H(+). The catalysed reaction is (R)-2-hydroxyglutarate + NAD(+) = 2-oxoglutarate + NADH + H(+). It catalyses the reaction (S)-malate + NAD(+) = oxaloacetate + NADH + H(+). The protein operates within amino-acid biosynthesis; L-serine biosynthesis; L-serine from 3-phospho-D-glycerate: step 1/3. Its function is as follows. Catalyzes the reversible oxidation of 3-phospho-D-glycerate to 3-phosphonooxypyruvate, the first step of the phosphorylated L-serine biosynthesis pathway. Also catalyzes the reversible oxidation of 2-hydroxyglutarate to 2-oxoglutarate and the reversible oxidation of (S)-malate to oxaloacetate. The protein is D-3-phosphoglycerate dehydrogenase (PHGDH) of Sus scrofa (Pig).